Here is a 186-residue protein sequence, read N- to C-terminus: QRCGEQGSGMECPNNLCCSQYGYCGMGGDYCGKGCQNGACWTSKRCGSQAGGKTCPNNHCCSQYGHCGFGAEYCGAGCQGGPCRADIKCGSQAGGKLCPNNLCCSQWGYCGLGSEFCGEGCQNGACSTDKPCGKDAGGRVCTNNYCCSKWGSCGIGPGYCGAGCQSGGCDGVFAEAIATNSTLLAE.

A Pyrrolidone carboxylic acid modification is found at Q1. Chitin-binding type-1 domains follow at residues 1–42 (QRCG…ACWT), 43–85 (SKRC…PCRA), 86–128 (DIKC…ACST), and 129–171 (DKPC…GCDG). Cystine bridges form between C3-C18, C12-C24, C17-C31, C35-C40, C46-C61, C55-C67, C60-C74, C78-C83, C89-C104, C98-C110, C103-C117, C121-C126, C132-C147, C141-C153, C146-C160, and C164-C169. Substrate is bound at residue 10–12 (MEC). 62–73 (SQYGHCGFGAEY) contacts substrate. 114 to 115 (SE) is a substrate binding site. The propeptide occupies 172–186 (VFAEAIATNSTLLAE). An N-linked (GlcNAc...) asparagine glycan is attached at N180.

In terms of assembly, homodimer, u-shaped.

N-acetyl-D-glucosamine / N-acetyl-D-neuraminic acid binding lectin. The sequence is that of Agglutinin isolectin 3 from Triticum aestivum (Wheat).